We begin with the raw amino-acid sequence, 103 residues long: uncharacterized protein (103 aa).

Its subcellular location is the mitochondrion. This is an uncharacterized protein from Claviceps purpurea (Ergot fungus).